Consider the following 90-residue polypeptide: Co-chaperonin GroES (90 aa).

The protein belongs to the GroES chaperonin family. In terms of assembly, heptamer of 7 subunits arranged in a ring. Interacts with the chaperonin GroEL.

The protein localises to the cytoplasm. In terms of biological role, together with the chaperonin GroEL, plays an essential role in assisting protein folding. The GroEL-GroES system forms a nano-cage that allows encapsulation of the non-native substrate proteins and provides a physical environment optimized to promote and accelerate protein folding. GroES binds to the apical surface of the GroEL ring, thereby capping the opening of the GroEL channel. The sequence is that of Co-chaperonin GroES from Borreliella afzelii (strain PKo) (Borrelia afzelii).